We begin with the raw amino-acid sequence, 263 residues long: 3-oxo-5-alpha-steroid 4-dehydrogenase 1 (263 aa).

Transmembrane regions (helical) follow at residues 16–33, 90–110, 115–135, 155–175, and 213–233; these read MLAALAYLQCAVGCAVLA, ILLAMFLVHYGHRCLIYPFLM, PMPLLACTMAIMFCTFNGYLQ, FLIGFGLWLAGMLINIHSDHI, and YALASWSVQGAAFAFFTFCFL.

It belongs to the steroid 5-alpha reductase family.

It is found in the microsome membrane. It localises to the endoplasmic reticulum membrane. The enzyme catalyses a 3-oxo-5alpha-steroid + NADP(+) = a 3-oxo-Delta(4)-steroid + NADPH + H(+). It carries out the reaction 5alpha-pregnane-3,20-dione + NADP(+) = progesterone + NADPH + H(+). The catalysed reaction is 17beta-hydroxy-5alpha-androstan-3-one + NADP(+) = testosterone + NADPH + H(+). It catalyses the reaction androst-4-ene-3,17-dione + NADPH + H(+) = 5alpha-androstan-3,17-dione + NADP(+). In terms of biological role, converts testosterone into 5-alpha-dihydrotestosterone and progesterone or corticosterone into their corresponding 5-alpha-3-oxosteroids. It plays a central role in sexual differentiation and androgen physiology. This Macaca fascicularis (Crab-eating macaque) protein is 3-oxo-5-alpha-steroid 4-dehydrogenase 1 (SRD5A1).